We begin with the raw amino-acid sequence, 37 residues long: GKFSVFSKILRSIAKVFKGVGKVRKQFKTASDLDKNQ.

Expressed by the venom gland.

Its subcellular location is the secreted. In terms of biological role, disrupts biological membranes, particularly those rich in phosphocholine. Has antimicrobial activity against Gram-negative bacterium E.coli, Gram-positive bacteria B.subtilis and S.aureus, and hemolytic activity against sheep, pig and guinea pig red blood cells. Has insecticidal activity against S.frugiperda ovarian cells by opening non-selective ion channels. Enhances the insecticidal activity of spider venom neurotoxic peptides. This is M-oxotoxin-Ot2d from Oxyopes takobius (Lynx spider).